A 255-amino-acid chain; its full sequence is ParA family protein TC_0871 (255 aa).

It belongs to the ParA family.

This chain is ParA family protein TC_0871, found in Chlamydia muridarum (strain MoPn / Nigg).